We begin with the raw amino-acid sequence, 513 residues long: ATP synthase subunit alpha (513 aa).

Residue Gly-169 to Thr-176 participates in ATP binding.

This sequence belongs to the ATPase alpha/beta chains family. In terms of assembly, F-type ATPases have 2 components, CF(1) - the catalytic core - and CF(0) - the membrane proton channel. CF(1) has five subunits: alpha(3), beta(3), gamma(1), delta(1), epsilon(1). CF(0) has three main subunits: a(1), b(2) and c(9-12). The alpha and beta chains form an alternating ring which encloses part of the gamma chain. CF(1) is attached to CF(0) by a central stalk formed by the gamma and epsilon chains, while a peripheral stalk is formed by the delta and b chains.

The protein resides in the cell inner membrane. It catalyses the reaction ATP + H2O + 4 H(+)(in) = ADP + phosphate + 5 H(+)(out). In terms of biological role, produces ATP from ADP in the presence of a proton gradient across the membrane. The alpha chain is a regulatory subunit. The protein is ATP synthase subunit alpha of Cupriavidus metallidurans (strain ATCC 43123 / DSM 2839 / NBRC 102507 / CH34) (Ralstonia metallidurans).